Reading from the N-terminus, the 743-residue chain is Extensin-2 (743 aa).

The first 22 residues, 1–22 (MGPSAHLISALGVIIMATMVAA), serve as a signal peptide directing secretion. Residues 46–93 (TPPLPYVDSSPPPTYTPAPEVEYKSPPPPYVYSSPPPPTYSPSPKVDY) form a disordered region. 2 stretches are compositionally biased toward pro residues: residues 47 to 61 (PPLP…PTYT) and 70 to 86 (SPPP…PTYS). Tandem repeats lie at residues 70 to 78 (SPPPPYVYS), 79 to 94 (SPPP…VDYK), 95 to 103 (SPPPPYVYS), 104 to 119 (SPPP…VDYK), 120 to 128 (SPPPPYVYN), 129 to 144 (SPPP…VDYK), 145 to 153 (SPPPPYVYS), 154 to 169 (SPPP…VEYK), 170 to 178 (SPPPPYVYS), 179 to 194 (SPPP…VDYK), 195 to 203 (SPPPPYVYS), 204 to 219 (SPPP…VEYK), 220 to 228 (SPPPPYVYS), 229 to 244 (SPPP…VDYK), 245 to 253 (SPPPPYVYS), 254 to 269 (SPPP…VDYK), 270 to 278 (SPPPPYVYS), 279 to 294 (SPPP…VDYK), 295 to 303 (SPPPPYVYS), 304 to 319 (SPPP…VDYK), 320 to 328 (SPPPPYVYS), 329 to 344 (SPPP…VDYK), 345 to 353 (SPPPPYVYS), 354 to 369 (SPPP…VDYK), 370 to 378 (SPPPPYVYS), 379 to 394 (SPPP…VEYK), 395 to 403 (SPPPPYVYS), 404 to 419 (SPPP…VYYK), 420 to 428 (SPPPPYVYS), 429 to 444 (SPPP…VYYK), 445 to 453 (SPPPPYVYS), 454 to 469 (SPPP…VYYK), 470 to 478 (SPPPPYVYS), 479 to 494 (SPPP…VYYK), 495 to 503 (SPPPPYVYS), 504 to 519 (SPPP…VYYK), 520 to 528 (SPPPPYVYS), 529 to 544 (SPPP…VHYK), 545 to 553 (SPPPPYVYS), 554 to 569 (SPPP…VHYK), 570 to 578 (SPPPPYVYN), 579 to 594 (SPPP…VYYK), 595 to 603 (SPPPPYVYS), 604 to 619 (SPPP…VYYK), 620 to 628 (SPPPPYVYS), 629 to 644 (SPPP…VYYK), and 645 to 660 (SPPP…VYYK). A 23 X 9 AA repeats of S-P-P-P-P-Y-V-Y-[SN] region spans residues 70 to 628 (SPPPPYVYSS…KSPPPPYVYS (559 aa)). The interval 79–660 (SPPPPTYSPS…YSPSPKVYYK (582 aa)) is 24 X 16 AA repeats of S-P-P-P-P-[YT]-Y-S-P-S-P-K-V-[DEYH]-Y-K. The tract at residues 715–743 (PPSYYSPSPKVEYKSPPPPSYSPSPKTEY) is disordered.

The protein belongs to the extensin family. Post-translationally, extensins contain a characteristic repeat of the pentapeptide Ser-Pro(4). The proline residues are hydroxylated and then O-glycosylated (arabinosylation). Synthetised as soluble proteins which become insolubilised in the cell wall through the intermolecular cross-linking of Tyr on adjacent monomers. Isodityrosine (IDT) stabilizes and makes rigid the part of the polypeptide where IDT functional sites are present. In terms of tissue distribution, predominantly expressed in the roots.

Its subcellular location is the secreted. It is found in the primary cell wall. Functionally, structural component which strengthens the primary cell wall. This Arabidopsis thaliana (Mouse-ear cress) protein is Extensin-2.